The chain runs to 894 residues: MPANTSAAIARSCEFSQYLHRLLTARPEERQRLEQSLHHPFSLEDMQAFADWPALDAPEALAPALRRLRQAVVARLICRDLESLATLDEVVSTISQLAEFAVRQALACAAASLPQYGRPIGEDSGEPQQLIVIGMGKLGGGELNVSSDIDLIFIYPEGGETDGARKISNHEYFTQVGKRLIALLNDATADGQVFRVDMRLRPYGDSGPLVMSFAALENYLLSQGREWERYAWIKAKAITGDADGLAQLVRPFVYRKYLDYNAYGAMRGLHAQIRREVARRDMADNIKLGPGGIREAEFIAQVFQLIRGGRDRTLQLRGTRATLERLAALRLLEPAAVAELQASYAFLRNLEHRLQYLDDQQTQTLPEAPETRQKIAASMGHADWPAFLDALNEVRRKVSRHFEQVFILPSEDSASHPLSELWLDVAEQSPETRLAELGYADPAAVARQLTGLAQSQRYLQMPLAGRKQLDALMPALIEVAARFPNADDTLSRIIGLMEAISRRASYLALLTEYPQTLQRLASLYSSSAWVSAYLSRHPILLDELLDARMLYAAPDWPLLAAQLETQLAQADGDVEAKMDALRHFQHAQTFRLVAQDLAGMWTLEALSDELSRLADLVLAAAVRHAWRDIPSRHCETPRFAVIGYGKLGGKELGYASDLDIIFLYDDEHPDAPDLYSRLARKLSTWLTSATAAGVLYDIDLRLRPNGSSGLLVSSISAFRQYQENQAWVWEHQALTRARFVAGDAGIGSQFEAERHAILTLERDPAKLRDEVMAMRQRMLDSHPAHDGDVKNARGGIIDIEFIVQYLILAHAKTLPALTGNTGNIALLAVAAEAGLIDRRLAEDARAAYRLYRRLQHSARLNDRKTVEVDESLRTAYARGRELWRQVFEQALDFS.

Residues M1–S410 are adenylyl removase. An adenylyl transferase region spans residues S415–S894.

The protein belongs to the GlnE family. Mg(2+) is required as a cofactor.

It catalyses the reaction [glutamine synthetase]-O(4)-(5'-adenylyl)-L-tyrosine + phosphate = [glutamine synthetase]-L-tyrosine + ADP. It carries out the reaction [glutamine synthetase]-L-tyrosine + ATP = [glutamine synthetase]-O(4)-(5'-adenylyl)-L-tyrosine + diphosphate. Involved in the regulation of glutamine synthetase GlnA, a key enzyme in the process to assimilate ammonia. When cellular nitrogen levels are high, the C-terminal adenylyl transferase (AT) inactivates GlnA by covalent transfer of an adenylyl group from ATP to specific tyrosine residue of GlnA, thus reducing its activity. Conversely, when nitrogen levels are low, the N-terminal adenylyl removase (AR) activates GlnA by removing the adenylyl group by phosphorolysis, increasing its activity. The regulatory region of GlnE binds the signal transduction protein PII (GlnB) which indicates the nitrogen status of the cell. The sequence is that of Bifunctional glutamine synthetase adenylyltransferase/adenylyl-removing enzyme from Chromobacterium violaceum (strain ATCC 12472 / DSM 30191 / JCM 1249 / CCUG 213 / NBRC 12614 / NCIMB 9131 / NCTC 9757 / MK).